The chain runs to 464 residues: Protein FAM90A10 (464 aa).

Disordered regions lie at residues methionine 1–leucine 42, valine 69–alanine 373, and histidine 415–proline 437. Composition is skewed to basic and acidic residues over residues glycine 74–glycine 89 and asparagine 97–arginine 114. Over residues leucine 180 to leucine 197 the composition is skewed to low complexity.

It belongs to the FAM90 family.

The polypeptide is Protein FAM90A10 (FAM90A10) (Homo sapiens (Human)).